A 445-amino-acid polypeptide reads, in one-letter code: GTPase Der (445 aa).

EngA-type G domains are found at residues 3 to 167 (PVIA…NLPD) and 180 to 353 (IKLA…ASAN). Residues 9–16 (GRPNVGKS), 56–60 (DTGGF), 119–122 (NKAE), 186–193 (GRPNVGKS), 233–237 (DTAGL), and 298–301 (NKWD) contribute to the GTP site. Positions 354–438 (RKMSTPVLTR…PLRIQLKSSV (85 aa)) constitute a KH-like domain.

It belongs to the TRAFAC class TrmE-Era-EngA-EngB-Septin-like GTPase superfamily. EngA (Der) GTPase family. In terms of assembly, associates with the 50S ribosomal subunit.

In terms of biological role, GTPase that plays an essential role in the late steps of ribosome biogenesis. The polypeptide is GTPase Der (Polaromonas naphthalenivorans (strain CJ2)).